A 215-amino-acid polypeptide reads, in one-letter code: 3-demethoxyubiquinol 3-hydroxylase (215 aa).

The segment at 26 to 47 (PSSAHSQRPSPAVVQPEHKMSE) is disordered. Residues E64, E94, H97, E146, E178, and H181 each contribute to the Fe cation site.

It belongs to the COQ7 family. It depends on Fe cation as a cofactor.

Its subcellular location is the cell membrane. It catalyses the reaction a 5-methoxy-2-methyl-3-(all-trans-polyprenyl)benzene-1,4-diol + AH2 + O2 = a 3-demethylubiquinol + A + H2O. It functions in the pathway cofactor biosynthesis; ubiquinone biosynthesis. In terms of biological role, catalyzes the hydroxylation of 2-nonaprenyl-3-methyl-6-methoxy-1,4-benzoquinol during ubiquinone biosynthesis. In Pseudomonas syringae pv. syringae (strain B728a), this protein is 3-demethoxyubiquinol 3-hydroxylase.